The following is a 725-amino-acid chain: Ferric reduction oxidase 2 (725 aa).

At 1–28 (MEIEKSNNGGSNPSAGEEFKDMIKGVTK) the chain is on the cytoplasmic side. Residues 29-48 (FLMMVIFLGTIMLWIMMPTL) traverse the membrane as a helical segment. The Extracellular segment spans residues 49 to 74 (TYRTKWLPHLRIKFGTSTYFGATGTT). The chain crosses the membrane as a helical span at residues 75–93 (LFMYMFPMMVVACLGCVYL). At 94–125 (HFKNRKSPHHIDRETKGGVWSKLRKPMLVKGP) the chain is on the cytoplasmic side. A helical membrane pass occupies residues 126-149 (LGIVSVTEITFLAMFVALLLWCFI). At 150 to 217 (TYLRNSFATI…MGLTSESSIK (68 aa)) the chain is on the extracellular side. Residues 183-303 (LGLIGNICLA…YLYIVFMLFF (121 aa)) form the Ferric oxidoreductase domain. Residues 218–241 (YHIWLGHMVMALFTVHGLCYIIYW) form a helical membrane-spanning segment. The heme site is built by His219 and His233. Over 242–291 (ASMHEISQMIMWDTKGVSNLAGEIALAAGLVMWATTYPKIRRRFFEVFFY) the chain is Cytoplasmic. Residues 292–316 (THYLYIVFMLFFVLHVGISFSFIAL) traverse the membrane as a helical segment. His293 and His306 together coordinate heme. Topologically, residues 317-338 (PGFYIFLVDRFLRFLQSRENVR) are extracellular. The region spanning 332-437 (QSRENVRLLA…EGPYGPASAD (106 aa)) is the FAD-binding FR-type domain. The helical transmembrane segment at 339 to 359 (LLAARILPSDTMELTFSKNSK) threads the bilayer. Residues 360–554 (LVYSPTSIMF…SISSILGPNS (195 aa)) lie on the Cytoplasmic side of the membrane. FAD is bound at residue 381-384 (HPFT). Residue 429 to 432 (GPYG) participates in NAD(+) binding. Residues 555–577 (WLWLGAILASSFLIFMIIIGIIT) traverse the membrane as a helical segment. Over 578 to 597 (RYYIYPIDHNTNKIYSLTSK) the chain is Extracellular. The helical transmembrane segment at 598 to 619 (TIIYILVISVSIMATCSAAMLW) threads the bilayer. The Cytoplasmic segment spans residues 620 to 725 (NKKKYGKVES…LHFESISFSW (106 aa)).

This sequence belongs to the ferric reductase (FRE) family. It depends on FAD as a cofactor. In terms of tissue distribution, expressed in the epidermal cells of the roots. High expression in lateral roots and root hairs. Detected in leaves, stems, siliques and in flowers in anthers and styles.

Its subcellular location is the cell membrane. The catalysed reaction is 2 a Fe(II)-siderophore + NAD(+) + H(+) = 2 a Fe(III)-siderophore + NADH. In terms of biological role, flavocytochrome that transfers electrons across the plasma membrane to reduce ferric iron chelates to form soluble ferrous iron in the rhizosphere. May be involved in the delivery of iron to developing pollen grains. Also acts as a copper-chelate reductase. Involved in glycine betaine-mediated chilling tolerance and reactive oxygen species accumulation. The protein is Ferric reduction oxidase 2 (FRO2) of Arabidopsis thaliana (Mouse-ear cress).